Reading from the N-terminus, the 320-residue chain is Pyrroline-5-carboxylate reductase (320 aa).

This sequence belongs to the pyrroline-5-carboxylate reductase family.

The enzyme catalyses L-proline + NADP(+) = (S)-1-pyrroline-5-carboxylate + NADPH + 2 H(+). The catalysed reaction is L-proline + NAD(+) = (S)-1-pyrroline-5-carboxylate + NADH + 2 H(+). Its pathway is amino-acid biosynthesis; L-proline biosynthesis; L-proline from L-glutamate 5-semialdehyde: step 1/1. This is Pyrroline-5-carboxylate reductase (P5CR) from Lophium arboricola (Zalerion arboricola).